The following is a 77-amino-acid chain: U8-lycotoxin-Ls1f (77 aa).

The first 20 residues, 1-20, serve as a signal peptide directing secretion; it reads MKLIIFTGLVLFAIVSLIEV. The propeptide occupies 21-26; it reads QADNER.

It belongs to the neurotoxin 19 (CSTX) family. 08 (U8-Lctx) subfamily. In terms of processing, contains 4 disulfide bonds. In terms of tissue distribution, expressed by the venom gland.

It localises to the secreted. This Lycosa singoriensis (Wolf spider) protein is U8-lycotoxin-Ls1f.